A 116-amino-acid chain; its full sequence is Type IV narrow pilus major component PilA5 (116 aa).

A propeptide spans 1–5 (MRAKG) (leader sequence). Phe-6 carries the post-translational modification N-methylphenylalanine. The chain crosses the membrane as a helical span at residues 6-26 (FTLIELAIVIVIIGILVAIAV).

Glycosylated.

Its subcellular location is the cell inner membrane. The protein localises to the cell outer membrane. The protein resides in the periplasm. Functionally, plays an essential role in forming the main structure of the narrow T4P pili that participates in twitching motility. This is Type IV narrow pilus major component PilA5 (pilA5) from Thermus thermophilus (strain ATCC BAA-163 / DSM 7039 / HB27).